A 90-amino-acid polypeptide reads, in one-letter code: UPF0184 protein (90 aa).

The stretch at 16-78 (DETKEEMVEL…QSLETEQNTE (63 aa)) forms a coiled coil. Residues 57–90 (SQQARQELQAERQSLETEQNTEPSTKSDQEQKKQ) are disordered. Residues 81-90 (TKSDQEQKKQ) are compositionally biased toward basic and acidic residues.

The protein belongs to the UPF0184 (EST00098) family.

This Branchiostoma floridae (Florida lancelet) protein is UPF0184 protein.